Consider the following 497-residue polypeptide: UPF0371 protein cu0538 (497 aa).

It belongs to the UPF0371 family.

The protein is UPF0371 protein cu0538 of Corynebacterium urealyticum (strain ATCC 43042 / DSM 7109).